The following is a 72-amino-acid chain: Large ribosomal subunit protein bL32c (72 aa).

A disordered region spans residues 49–72; it reads PPAPVSENWDDEAKGFGKDLDAAE. A compositionally biased stretch (basic and acidic residues) spans 59-72; it reads DEAKGFGKDLDAAE.

This sequence belongs to the bacterial ribosomal protein bL32 family.

The protein localises to the plastid. Its subcellular location is the chloroplast. The sequence is that of Large ribosomal subunit protein bL32c from Ostreococcus tauri.